Here is a 143-residue protein sequence, read N- to C-terminus: Ribosome-binding factor A (143 aa).

Residues 1–20 (MRFMGKNKFHTGPGPSQRQL) are disordered.

This sequence belongs to the RbfA family. As to quaternary structure, monomer. Binds 30S ribosomal subunits, but not 50S ribosomal subunits or 70S ribosomes.

The protein localises to the cytoplasm. Functionally, one of several proteins that assist in the late maturation steps of the functional core of the 30S ribosomal subunit. Associates with free 30S ribosomal subunits (but not with 30S subunits that are part of 70S ribosomes or polysomes). Required for efficient processing of 16S rRNA. May interact with the 5'-terminal helix region of 16S rRNA. The sequence is that of Ribosome-binding factor A from Roseobacter denitrificans (strain ATCC 33942 / OCh 114) (Erythrobacter sp. (strain OCh 114)).